A 557-amino-acid polypeptide reads, in one-letter code: NADP-dependent malic enzyme (557 aa).

Catalysis depends on Tyr91, which acts as the Proton donor. Residue Arg144 participates in NADP(+) binding. Substrate is bound by residues Arg144 and Lys162. Catalysis depends on Lys162, which acts as the Proton acceptor. Mn(2+) is bound by residues Glu234 and Asp235. Asn238 contributes to the NADP(+) binding site. Asp258 contacts Mn(2+). Residues 291–294, Ser325, Asn397, and Asn443 each bind NADP(+); that span reads AGEA. Residue Asn443 participates in substrate binding.

Belongs to the malic enzymes family. As to quaternary structure, homotetramer. Mg(2+) is required as a cofactor. Mn(2+) serves as cofactor. The N-terminus is blocked.

The protein resides in the cytoplasm. The enzyme catalyses (S)-malate + NADP(+) = pyruvate + CO2 + NADPH. It carries out the reaction oxaloacetate + H(+) = pyruvate + CO2. This Columba livia (Rock dove) protein is NADP-dependent malic enzyme (ME1).